We begin with the raw amino-acid sequence, 118 residues long: Small ribosomal subunit protein uS13 (118 aa).

A disordered region spans residues 94 to 118 (SLPLRGQRTKTNARTRKGPRKPIKK).

This sequence belongs to the universal ribosomal protein uS13 family. Part of the 30S ribosomal subunit. Forms a loose heterodimer with protein S19. Forms two bridges to the 50S subunit in the 70S ribosome.

Its function is as follows. Located at the top of the head of the 30S subunit, it contacts several helices of the 16S rRNA. In the 70S ribosome it contacts the 23S rRNA (bridge B1a) and protein L5 of the 50S subunit (bridge B1b), connecting the 2 subunits; these bridges are implicated in subunit movement. Contacts the tRNAs in the A and P-sites. The polypeptide is Small ribosomal subunit protein uS13 (Aliivibrio fischeri (strain ATCC 700601 / ES114) (Vibrio fischeri)).